A 367-amino-acid polypeptide reads, in one-letter code: tRNA/tmRNA (uracil-C(5))-methyltransferase (367 aa).

Gln182, Tyr210, Asn215, Glu231, and Asp293 together coordinate S-adenosyl-L-methionine. Cys318 acts as the Nucleophile in catalysis. The active-site Proton acceptor is Glu352.

The protein belongs to the class I-like SAM-binding methyltransferase superfamily. RNA M5U methyltransferase family. TrmA subfamily.

The enzyme catalyses uridine(54) in tRNA + S-adenosyl-L-methionine = 5-methyluridine(54) in tRNA + S-adenosyl-L-homocysteine + H(+). The catalysed reaction is uridine(341) in tmRNA + S-adenosyl-L-methionine = 5-methyluridine(341) in tmRNA + S-adenosyl-L-homocysteine + H(+). In terms of biological role, dual-specificity methyltransferase that catalyzes the formation of 5-methyluridine at position 54 (m5U54) in all tRNAs, and that of position 341 (m5U341) in tmRNA (transfer-mRNA). The protein is tRNA/tmRNA (uracil-C(5))-methyltransferase of Neisseria meningitidis serogroup C (strain 053442).